The primary structure comprises 229 residues: Large ribosomal subunit protein uL1 (229 aa).

Belongs to the universal ribosomal protein uL1 family. In terms of assembly, part of the 50S ribosomal subunit.

Its function is as follows. Binds directly to 23S rRNA. The L1 stalk is quite mobile in the ribosome, and is involved in E site tRNA release. Functionally, protein L1 is also a translational repressor protein, it controls the translation of the L11 operon by binding to its mRNA. The chain is Large ribosomal subunit protein uL1 from Mycoplasmopsis pulmonis (strain UAB CTIP) (Mycoplasma pulmonis).